The following is a 35-amino-acid chain: Photosystem II reaction center protein M (35 aa).

The helical transmembrane segment at 5–25 (ILGLIATALFILIPTSFLIIL) threads the bilayer.

This sequence belongs to the PsbM family. As to quaternary structure, PSII is composed of 1 copy each of membrane proteins PsbA, PsbB, PsbC, PsbD, PsbE, PsbF, PsbH, PsbI, PsbJ, PsbK, PsbL, PsbM, PsbT, PsbX, PsbY, PsbZ, Psb30/Ycf12, at least 3 peripheral proteins of the oxygen-evolving complex and a large number of cofactors. It forms dimeric complexes.

It is found in the plastid. The protein localises to the chloroplast thylakoid membrane. Its function is as follows. One of the components of the core complex of photosystem II (PSII). PSII is a light-driven water:plastoquinone oxidoreductase that uses light energy to abstract electrons from H(2)O, generating O(2) and a proton gradient subsequently used for ATP formation. It consists of a core antenna complex that captures photons, and an electron transfer chain that converts photonic excitation into a charge separation. This subunit is found at the monomer-monomer interface. The protein is Photosystem II reaction center protein M of Oltmannsiellopsis viridis (Marine flagellate).